The primary structure comprises 135 residues: Nucleoside diphosphate kinase (135 aa).

6 residues coordinate ATP: Lys-9, Tyr-57, Arg-85, Thr-91, Arg-102, and Asn-112. His-115 functions as the Pros-phosphohistidine intermediate in the catalytic mechanism.

The protein belongs to the NDK family. Homotetramer. The cofactor is Mg(2+).

Its subcellular location is the cytoplasm. It catalyses the reaction a 2'-deoxyribonucleoside 5'-diphosphate + ATP = a 2'-deoxyribonucleoside 5'-triphosphate + ADP. The enzyme catalyses a ribonucleoside 5'-diphosphate + ATP = a ribonucleoside 5'-triphosphate + ADP. In terms of biological role, major role in the synthesis of nucleoside triphosphates other than ATP. The ATP gamma phosphate is transferred to the NDP beta phosphate via a ping-pong mechanism, using a phosphorylated active-site intermediate. The sequence is that of Nucleoside diphosphate kinase from Thermoanaerobacter pseudethanolicus (strain ATCC 33223 / 39E) (Clostridium thermohydrosulfuricum).